We begin with the raw amino-acid sequence, 154 residues long: Transcriptional repressor NrdR (154 aa).

Residues 3–34 (CPFCGNDETKVLESRQVEEGTAVRRRRECERC) fold into a zinc finger. The ATP-cone domain maps to 49 to 139 (LIVVKKDGRR…VYREFKDVQR (91 aa)).

The protein belongs to the NrdR family. Zn(2+) serves as cofactor.

Its function is as follows. Negatively regulates transcription of bacterial ribonucleotide reductase nrd genes and operons by binding to NrdR-boxes. The polypeptide is Transcriptional repressor NrdR (Desulfitobacterium hafniense (strain DSM 10664 / DCB-2)).